Here is a 252-residue protein sequence, read N- to C-terminus: MAALIPENLSREQCLYLAKLAEQAERYEEMVQFMDKLVLNSTPAGELTVEERNLLSVAYKNVIGSLRAAWRIVSSIEQKEESRKNEEHVHLVKEYRGKVENELSQVCAGILKLLESNLVPSATTSESKVFYLKMKGDYYRYLAEFKIGDERKQAAEDTMNSYKAAQEIALTDLPPTHPIRLGLALNFSVFYFEILNSSDKACSMAKQAFEEAIAELDTLGEESYKDSTLIMQLLRDNLTLWTSDAQDQLDES.

It belongs to the 14-3-3 family. In terms of assembly, homodimer.

The polypeptide is 14-3-3 protein 10 (TFT10) (Solanum lycopersicum (Tomato)).